The chain runs to 506 residues: Acetylcholine receptor subunit gamma (506 aa).

Positions 1-17 are cleaved as a signal peptide; the sequence is MVLTLLLIICLALEVRS. Over 18–235 the chain is Extracellular; that stretch reads ENEEGRLIEK…IIFFLIIQRK (218 aa). Asparagine 85 carries an N-linked (GlcNAc...) asparagine glycan. Cysteine 145 and cysteine 159 form a disulfide bridge. Transmembrane regions (helical) follow at residues 236–260, 269–287, and 303–324; these read PLFY…VYFL, CTLS…FLIA, and YLIF…VLNV. Topologically, residues 325 to 466 are cytoplasmic; the sequence is SLRTPNTHSL…WVLIGKVIDK (142 aa). Tyrosine 381 is modified (phosphotyrosine; by Tyr-kinases). A helical membrane pass occupies residues 467-490; the sequence is ACFWIALLLFSIGTLAIFLTGHFN.

Belongs to the ligand-gated ion channel (TC 1.A.9) family. Acetylcholine receptor (TC 1.A.9.1) subfamily. Gamma/CHRNG sub-subfamily. As to quaternary structure, pentamer of two alpha chains, and one each of the beta, delta, and gamma chains. Post-translationally, seems not to be glycosylated on Asn-158.

It is found in the postsynaptic cell membrane. The protein resides in the cell membrane. The enzyme catalyses K(+)(in) = K(+)(out). The catalysed reaction is Na(+)(in) = Na(+)(out). In terms of biological role, after binding acetylcholine, the AChR responds by an extensive change in conformation that affects all subunits and leads to opening of an ion-conducting channel across the plasma membrane. The sequence is that of Acetylcholine receptor subunit gamma (CHRNG) from Tetronarce californica (Pacific electric ray).